Here is a 154-residue protein sequence, read N- to C-terminus: Protein phosphatase 1 regulatory subunit 27 (154 aa).

ANK repeat units follow at residues 63–92 (SGLA…DIHQ) and 96–125 (AGWT…DRDA).

As to quaternary structure, interacts with DYSF and PPP1CA.

In terms of biological role, inhibits phosphatase activity of protein phosphatase 1 (PP1) complexes. This Homo sapiens (Human) protein is Protein phosphatase 1 regulatory subunit 27 (PPP1R27).